Consider the following 217-residue polypeptide: 3,4-dihydroxy-2-butanone 4-phosphate synthase (217 aa).

D-ribulose 5-phosphate contacts are provided by residues 37–38, aspartate 42, 150–154, and glutamate 174; these read RE and RGGHT. Residue glutamate 38 coordinates Mg(2+). Residue histidine 153 coordinates Mg(2+).

It belongs to the DHBP synthase family. Homodimer. Mg(2+) serves as cofactor. Mn(2+) is required as a cofactor.

The catalysed reaction is D-ribulose 5-phosphate = (2S)-2-hydroxy-3-oxobutyl phosphate + formate + H(+). Its pathway is cofactor biosynthesis; riboflavin biosynthesis; 2-hydroxy-3-oxobutyl phosphate from D-ribulose 5-phosphate: step 1/1. Its function is as follows. Catalyzes the conversion of D-ribulose 5-phosphate to formate and 3,4-dihydroxy-2-butanone 4-phosphate. The sequence is that of 3,4-dihydroxy-2-butanone 4-phosphate synthase from Klebsiella pneumoniae (strain 342).